We begin with the raw amino-acid sequence, 249 residues long: MKPVLFELFGLKIYGYGAMIALGILAAVILLDKRSKKRGYNEDHIFNMAIVGIIGGILGGKLLYIIVDIKNIIDNPEILKDLGNGFVIYGAIIGGAISVYLYCKKKNWDVLKMLDLVVPSVALAQGFGRIGCFLAGCCYGKPTKLPIGVMFTNSPFAPSNIHLHPTQIYSSIFDFLLAFFLLWYSRKAEKSGRVFSLYVIIYGVGRVIVEFLRGDPRGNVSMLSTSQFISLFTIIIGIFVFNIDRFRKQ.

7 consecutive transmembrane segments (helical) span residues 11–31, 49–69, 82–102, 116–136, 163–183, 192–212, and 223–243; these read LKIY…VILL, AIVG…IVDI, LGNG…VYLY, LVVP…FLAG, LHPT…FLLW, GRVF…VEFL, and LSTS…VFNI. Residue arginine 129 participates in a 1,2-diacyl-sn-glycero-3-phospho-(1'-sn-glycerol) binding.

Belongs to the Lgt family.

It is found in the cell membrane. It catalyses the reaction L-cysteinyl-[prolipoprotein] + a 1,2-diacyl-sn-glycero-3-phospho-(1'-sn-glycerol) = an S-1,2-diacyl-sn-glyceryl-L-cysteinyl-[prolipoprotein] + sn-glycerol 1-phosphate + H(+). Its pathway is protein modification; lipoprotein biosynthesis (diacylglyceryl transfer). Functionally, catalyzes the transfer of the diacylglyceryl group from phosphatidylglycerol to the sulfhydryl group of the N-terminal cysteine of a prolipoprotein, the first step in the formation of mature lipoproteins. In Clostridium tetani (strain Massachusetts / E88), this protein is Phosphatidylglycerol--prolipoprotein diacylglyceryl transferase.